Reading from the N-terminus, the 562-residue chain is Putative transport protein PC1_1686 (562 aa).

The next 6 helical transmembrane spans lie at Leu-8 to Gly-28, Leu-32 to Gln-52, Phe-66 to Phe-86, Phe-93 to Phe-113, Trp-116 to Val-136, and His-158 to Ala-178. RCK C-terminal domains are found at residues Leu-202–Asp-288 and Val-292–Phe-373. 5 helical membrane passes run Leu-383 to Phe-403, Phe-406 to Leu-426, Phe-447 to Ser-467, Ser-478 to Leu-498, and Gly-537 to Trp-557.

This sequence belongs to the AAE transporter (TC 2.A.81) family. YbjL subfamily.

The protein localises to the cell membrane. The polypeptide is Putative transport protein PC1_1686 (Pectobacterium carotovorum subsp. carotovorum (strain PC1)).